We begin with the raw amino-acid sequence, 1242 residues long: Structural polyprotein (1242 aa).

Positions Trp14–Arg101 are disordered. Low complexity predominate over residues Arg26–Gln42. The interval Gln35–Gln66 is host transcription inhibition. The Nuclear localization signal signature appears at Pro59–Pro96. The segment covering Arg61–Lys73 has biased composition (basic residues). The segment covering Pro74–Pro86 has biased composition (basic and acidic residues). The tract at residues Gln82–Ile111 is binding to the viral RNA. Residues Lys87–Arg98 show a composition bias toward basic residues. The ribosome-binding stretch occupies residues Pro96–Cys110. Residues Cys110 and Cys125 are joined by a disulfide bond. Positions Cys110–Trp258 constitute a Peptidase S3 domain. His136 (charge relay system) is an active-site residue. The Nuclear export signal signature appears at Ile141–Tyr151. The tract at residues Lys152 to Tyr157 is interaction with spike glycoprotein E2. Catalysis depends on Asp158, which acts as the Charge relay system. Positions Pro180–Ala190 are dimerization of the capsid protein. Ser210 serves as the catalytic Charge relay system. The tract at residues Asp216 to Pro220 is dimerization of the capsid protein. The tract at residues Ala259–Ile272 is functions as an uncleaved signal peptide for the precursor of protein E3/E2. 8 cysteine pairs are disulfide-bonded: Cys267-Cys276, Cys281-Cys285, Cys284-Cys316, Cys343-Cys449, Cys346-Cys352, Cys415-Cys429, Cys477-Cys589, and Cys527-Cys544. Residue Asn271 is glycosylated (N-linked (GlcNAc...) asparagine; by host). The Extracellular segment spans residues Ser325–Thr690. 2 interaction with host Mxra8 receptor regions span residues His350–His353 and His386–His388. 2 interaction with host Mxra8 receptor regions span residues Gln508 to Asn511 and Thr540 to Val546. An N-linked (GlcNAc...) asparagine; by host glycan is attached at Asn586. A helical membrane pass occupies residues Ile691–Met711. The Cytoplasmic portion of the chain corresponds to Cys712–Ala746. Residues Val714 to Lys718 form an interaction with the capsid protein region. Residues Cys719, Cys739, and Cys740 are each lipidated (S-palmitoyl cysteine; by host). Residues Cys719 to Cys739 are transient transmembrane before p62-6K protein processing. A disulfide bond links Cys719 and Cys740. The Extracellular portion of the chain corresponds to Ala747–Gln761. N-linked (GlcNAc...) asparagine; by host glycosylation is present at Asn760. The helical transmembrane segment at Ser762 to Ala782 threads the bilayer. Topologically, residues Arg783–Leu785 are cytoplasmic. The helical transmembrane segment at Leu786–Ala806 threads the bilayer. Residues Tyr807–Leu1217 lie on the Extracellular side of the membrane. Intrachain disulfides connect Cys855–Cys920, Cys868–Cys900, Cys869–Cys902, and Cys874–Cys884. An E1 fusion peptide loop region spans residues Val890–Thr907. N-linked (GlcNAc...) asparagine; by host glycosylation is found at Asn947 and Asn1076. 4 cysteine pairs are disulfide-bonded: Cys1065–Cys1077, Cys1107–Cys1180, Cys1112–Cys1184, and Cys1134–Cys1174. The helical transmembrane segment at Ala1218–Val1238 threads the bilayer. A lipid anchor (S-palmitoyl cysteine; by host) is attached at Cys1237. The Cytoplasmic portion of the chain corresponds to Thr1239 to Arg1242.

In terms of assembly, homodimer. Homomultimer. Interacts with host karyopherin KPNA4; this interaction allows the nuclear import of the viral capsid protein. Interacts with spike glycoprotein E2. Interacts with host IRAK1; the interaction leads to inhibition of IRAK1-dependent signaling. As to quaternary structure, the precursor of protein E3/E2 and E1 form a heterodimer shortly after synthesis. The precursor of protein E3/E2 and E1 form a heterodimer shortly after synthesis. Processing of the precursor of protein E3/E2 into E2 and E3 results in a heterodimer of the spike glycoproteins E2 and E1. Spike at virion surface are constituted of a trimer of E2-E1 heterodimers. After target cell attachment and endocytosis, E1 change conformation to form homotrimers. Interacts with 6K protein. In terms of assembly, interacts with spike glycoprotein E1. Processing of the precursor of protein E3/E2 into E2 and E3 results in a heterodimer of the spike glycoproteins E2 and E1. Spike at virion surface are constituted of a trimer of E2-E1 heterodimers. Interacts with 6K protein. Interacts with host MXRA8; this interaction mediates virus entry. As to quaternary structure, oligomer. Interacts with spike glycoprotein E1. Interacts with spike glycoprotein E2. Structural polyprotein: Specific enzymatic cleavages in vivo yield mature proteins. Capsid protein is auto-cleaved during polyprotein translation, unmasking a signal peptide at the N-terminus of the precursor of E3/E2. The remaining polyprotein is then targeted to the host endoplasmic reticulum, where host signal peptidase cleaves it into pE2, 6K and E1 proteins. pE2 is further processed to mature E3 and E2 by host furin in trans-Golgi vesicle. Post-translationally, palmitoylated via thioester bonds. These palmitoylations may induce disruption of the C-terminus transmembrane. This would result in the reorientation of E2 C-terminus from lumenal to cytoplasmic side. In terms of processing, N-glycosylated. Palmitoylated via thioester bonds.

It is found in the virion. Its subcellular location is the host cytoplasm. The protein resides in the host cell membrane. The protein localises to the host nucleus. It localises to the virion membrane. It is found in the host Golgi apparatus. Its subcellular location is the host trans-Golgi network. The protein resides in the host endoplasmic reticulum. The catalysed reaction is Autocatalytic release of the core protein from the N-terminus of the togavirus structural polyprotein by hydrolysis of a -Trp-|-Ser- bond.. In terms of biological role, forms an icosahedral capsid with a T=4 symmetry composed of 240 copies of the capsid protein surrounded by a lipid membrane through which penetrate 80 spikes composed of trimers of E1-E2 heterodimers. The capsid protein binds to the viral RNA genome at a site adjacent to a ribosome binding site for viral genome translation following genome release. Possesses a protease activity that results in its autocatalytic cleavage from the nascent structural protein. Following its self-cleavage, the capsid protein transiently associates with ribosomes, and within several minutes the protein binds to viral RNA and rapidly assembles into icosahedric core particles. The resulting nucleocapsid eventually associates with the cytoplasmic domain of the spike glycoprotein E2 at the cell membrane, leading to budding and formation of mature virions. In case of infection, new virions attach to target cells and after clathrin-mediated endocytosis their membrane fuses with the host endosomal membrane. This leads to the release of the nucleocapsid into the cytoplasm, followed by an uncoating event necessary for the genomic RNA to become accessible. The uncoating might be triggered by the interaction of capsid proteins with ribosomes. Binding of ribosomes would release the genomic RNA since the same region is genomic RNA-binding and ribosome-binding. Specifically inhibits interleukin-1 receptor-associated kinase 1/IRAK1-dependent signaling during viral entry, representing a means by which the alphaviruses may evade innate immune detection and activation prior to viral gene expression. Provides the signal sequence for the translocation of the precursor of protein E3/E2 to the host endoplasmic reticulum. Furin-cleaved E3 remains associated with spike glycoprotein E1 and mediates pH protection of the latter during the transport via the secretory pathway. After virion release from the host cell, the assembly protein E3 is gradually released in the extracellular space. Its function is as follows. Plays a role in viral attachment to target host cell, by binding to the cell receptor MXRA8. Synthesized as a p62 precursor which is processed by furin at the cell membrane just before virion budding, giving rise to E2-E1 heterodimer. The p62-E1 heterodimer is stable, whereas E2-E1 is unstable and dissociate at low pH. p62 is processed at the last step, presumably to avoid E1 fusion activation before its final export to cell surface. E2 C-terminus contains a transitory transmembrane that would be disrupted by palmitoylation, resulting in reorientation of the C-terminal tail from lumenal to cytoplasmic side. This step is critical since E2 C-terminus is involved in budding by interacting with capsid proteins. This release of E2 C-terminus in cytoplasm occurs lately in protein export, and precludes premature assembly of particles at the endoplasmic reticulum membrane. Functionally, acts as a viroporin that participates in virus glycoprotein processing and transport to the plasma membrane, cell permeabilization and budding of viral particles. Disrupts the calcium homeostasis of the cell, probably at the endoplasmic reticulum level. This leads to cytoplasmic calcium elevation. Because of its lipophilic properties, the 6K protein is postulated to influence the selection of lipids that interact with the transmembrane domains of the glycoproteins, which, in turn, affects the deformability of the bilayer required for the extreme curvature that occurs as budding proceeds. Present in low amount in virions, about 3% compared to viral glycoproteins. In terms of biological role, class II viral fusion protein. Fusion activity is inactive as long as E1 is bound to E2 in mature virion. After virus attachment to target cell via host MXRA8 and endocytosis, acidification of the endosome induce dissociation of E1/E2 heterodimer and concomitant trimerization of the E1 subunits. This E1 trimer is fusion active, and promotes release of viral nucleocapsid in cytoplasm after endosome and viral membrane fusion. Efficient fusion requires the presence of cholesterol and sphingolipid in the target membrane. The protein is Structural polyprotein of Mayaro virus (strain Brazil) (MAYV).